A 509-amino-acid chain; its full sequence is Aspartyl/glutamyl-tRNA(Asn/Gln) amidotransferase subunit B (509 aa).

This sequence belongs to the GatB/GatE family. GatB subfamily. In terms of assembly, heterotrimer of A, B and C subunits.

The catalysed reaction is L-glutamyl-tRNA(Gln) + L-glutamine + ATP + H2O = L-glutaminyl-tRNA(Gln) + L-glutamate + ADP + phosphate + H(+). It carries out the reaction L-aspartyl-tRNA(Asn) + L-glutamine + ATP + H2O = L-asparaginyl-tRNA(Asn) + L-glutamate + ADP + phosphate + 2 H(+). In terms of biological role, allows the formation of correctly charged Asn-tRNA(Asn) or Gln-tRNA(Gln) through the transamidation of misacylated Asp-tRNA(Asn) or Glu-tRNA(Gln) in organisms which lack either or both of asparaginyl-tRNA or glutaminyl-tRNA synthetases. The reaction takes place in the presence of glutamine and ATP through an activated phospho-Asp-tRNA(Asn) or phospho-Glu-tRNA(Gln). This chain is Aspartyl/glutamyl-tRNA(Asn/Gln) amidotransferase subunit B, found in Psychrobacter cryohalolentis (strain ATCC BAA-1226 / DSM 17306 / VKM B-2378 / K5).